Consider the following 352-residue polypeptide: Uroporphyrinogen decarboxylase (352 aa).

Substrate-binding positions include Arg27 to Arg31, Asp77, Tyr154, Thr209, and His325.

Belongs to the uroporphyrinogen decarboxylase family. As to quaternary structure, homodimer.

It is found in the cytoplasm. It carries out the reaction uroporphyrinogen III + 4 H(+) = coproporphyrinogen III + 4 CO2. The protein operates within porphyrin-containing compound metabolism; protoporphyrin-IX biosynthesis; coproporphyrinogen-III from 5-aminolevulinate: step 4/4. Its function is as follows. Catalyzes the decarboxylation of four acetate groups of uroporphyrinogen-III to yield coproporphyrinogen-III. This is Uroporphyrinogen decarboxylase from Legionella pneumophila (strain Paris).